The primary structure comprises 231 residues: Sporulation protein RMD6 (231 aa).

The protein localises to the peroxisome. In terms of biological role, required for sporulation. Required for meiotic nuclear division. This chain is Sporulation protein RMD6 (RMD6), found in Saccharomyces cerevisiae (strain ATCC 204508 / S288c) (Baker's yeast).